Here is a 231-residue protein sequence, read N- to C-terminus: Potassium/proton antiporter CemA (231 aa).

Transmembrane regions (helical) follow at residues 7–27 (FISL…SLSF), 116–136 (IISF…LIFL), 156–176 (ILLL…ELMI), and 191–211 (IISG…KYWI).

It belongs to the CemA family.

It is found in the plastid. Its subcellular location is the chloroplast inner membrane. The enzyme catalyses K(+)(in) + H(+)(out) = K(+)(out) + H(+)(in). Its function is as follows. Contributes to K(+)/H(+) antiport activity by supporting proton efflux to control proton extrusion and homeostasis in chloroplasts in a light-dependent manner to modulate photosynthesis. Prevents excessive induction of non-photochemical quenching (NPQ) under continuous-light conditions. Indirectly promotes efficient inorganic carbon uptake into chloroplasts. This chain is Potassium/proton antiporter CemA, found in Morus indica (Mulberry).